The sequence spans 155 residues: Transcriptional repressor NrdR (155 aa).

Residues 1–11 (MECPNCHQNAS) are compositionally biased toward polar residues. The tract at residues 1–22 (MECPNCHQNASRVIDSRPSDEN) is disordered. A zinc finger lies at 3–34 (CPNCHQNASRVIDSRPSDENRAIRRRRECENC). An ATP-cone domain is found at 49-139 (LLVIKNDGTR…IYREFKDMSS (91 aa)).

It belongs to the NrdR family. The cofactor is Zn(2+).

Functionally, negatively regulates transcription of bacterial ribonucleotide reductase nrd genes and operons by binding to NrdR-boxes. This chain is Transcriptional repressor NrdR, found in Lactobacillus helveticus (strain DPC 4571).